The primary structure comprises 150 residues: Large ribosomal subunit protein bL9 (150 aa).

This sequence belongs to the bacterial ribosomal protein bL9 family.

Binds to the 23S rRNA. This Corynebacterium glutamicum (strain ATCC 13032 / DSM 20300 / JCM 1318 / BCRC 11384 / CCUG 27702 / LMG 3730 / NBRC 12168 / NCIMB 10025 / NRRL B-2784 / 534) protein is Large ribosomal subunit protein bL9.